The chain runs to 144 residues: Large ribosomal subunit protein uL15 (144 aa).

Positions 1–54 (MRLNTLSPAAGSKHAPKRVGRGMGSGLGKTAGRGHKGQKSRSGGGVRPGFEGGQ) are disordered. Composition is skewed to gly residues over residues 21-31 (RGMGSGLGKTA) and 42-52 (SGGGVRPGFEG).

This sequence belongs to the universal ribosomal protein uL15 family. Part of the 50S ribosomal subunit.

In terms of biological role, binds to the 23S rRNA. In Shewanella baltica (strain OS223), this protein is Large ribosomal subunit protein uL15.